A 139-amino-acid chain; its full sequence is Putative nickel-responsive regulator (139 aa).

The Ni(2+) site is built by histidine 79, histidine 90, histidine 92, and cysteine 98.

This sequence belongs to the transcriptional regulatory CopG/NikR family. The cofactor is Ni(2+).

Transcriptional regulator. The chain is Putative nickel-responsive regulator from Geobacter metallireducens (strain ATCC 53774 / DSM 7210 / GS-15).